Here is a 473-residue protein sequence, read N- to C-terminus: Glycine--tRNA ligase (473 aa).

Substrate-binding residues include R101 and E172. ATP is bound by residues 204–206 (RNE), 214–219 (FRTREF), 289–290 (EL), and 333–336 (GVER). 219-223 (FEQME) lines the substrate pocket. Substrate is bound at residue 329-333 (EPSVG).

It belongs to the class-II aminoacyl-tRNA synthetase family. As to quaternary structure, homodimer.

The protein resides in the cytoplasm. The enzyme catalyses tRNA(Gly) + glycine + ATP = glycyl-tRNA(Gly) + AMP + diphosphate. Catalyzes the attachment of glycine to tRNA(Gly). In Ureaplasma urealyticum serovar 10 (strain ATCC 33699 / Western), this protein is Glycine--tRNA ligase.